The chain runs to 311 residues: Malate dehydrogenase (311 aa).

Residues Gly7–Gly13 and Asp34 contribute to the NAD(+) site. Positions 81 and 87 each coordinate substrate. NAD(+) is bound by residues Asn94 and Ile117–Asn119. Substrate is bound by residues Asn119 and Arg153. The active-site Proton acceptor is His177. Met227 serves as a coordination point for NAD(+).

The protein belongs to the LDH/MDH superfamily. MDH type 1 family. Homodimer.

The catalysed reaction is (S)-malate + NAD(+) = oxaloacetate + NADH + H(+). Functionally, catalyzes the reversible oxidation of malate to oxaloacetate. The chain is Malate dehydrogenase from Colwellia psychrerythraea (strain 34H / ATCC BAA-681) (Vibrio psychroerythus).